Here is a 652-residue protein sequence, read N- to C-terminus: Carboxypeptidase Z (652 aa).

Residues 1 to 18 form the signal peptide; sequence MPPPLPLLLLTVLVVAAA. The region spanning 27–160 is the FZ domain; that stretch reads NPAGECHRPP…TREDEGCYDP (134 aa). Intrachain disulfides connect Cys-43/Cys-109, Cys-51/Cys-102, Cys-93/Cys-129, Cys-118/Cys-157, and Cys-122/Cys-146. Residues 186 to 502 enclose the Peptidase M14 domain; that stretch reads SHHSYAQMVR…ESLLNFVETV (317 aa). His-248 and Glu-251 together coordinate Zn(2+). N-linked (GlcNAc...) asparagine glycosylation occurs at Asn-281. A Zn(2+)-binding site is contributed by His-380. Glu-472 acts as the Proton donor/acceptor in catalysis. Residues 595–629 form a disordered region; it reads LRRTGPHDPLGGASSLGEATEPDPLRARRQPSADG.

This sequence belongs to the peptidase M14 family. Requires Zn(2+) as cofactor. In placenta, it is present within invasive trophoblasts and in the surrounding extracellular space. Also present in amnion cells, but is not readily apparent in the extracellular matrix of this cell type. Present in normal pituitary gland and neoplastic pituitary gland (especially POMC-, GH- and PRL-producing adenomas) (at protein level). Widely expressed.

The protein localises to the secreted. The protein resides in the extracellular space. Its subcellular location is the extracellular matrix. With respect to regulation, inhibited by 2-mercaptomethyl-3-guanidinoethylthiopropanoic acid (MGTA) and guanidinoethylmercaptosuccinic acid (GEMSA). Inhibited by chelating agents such as EDTA and EGTA. In terms of biological role, cleaves substrates with C-terminal arginine residues. Probably modulates the Wnt signaling pathway, by cleaving some undefined protein. May play a role in cleavage during prohormone processing. The protein is Carboxypeptidase Z (CPZ) of Homo sapiens (Human).